A 365-amino-acid chain; its full sequence is MKFIDEARIEAIAGNGGNGSASFRREKFVPFGGPDGGDGGRGGSVFAQADRNINTLIDFRYAKKHVARNGENGRGSDCYGAAGEDVTLRMPVGTLISDMDTGEVIADLTEHGQLVCLAEGGMGGWGNLHFKSSTNRAPRQQVDGKPGERRMLKLELKVLADVGLLGMPNAGKSTFISHVSNARPKVADYPFTTLHPNLGVVRVDHEQSFVVADIPGLIEGAAEGAGLGHQFLRHLQRTGLLLHIVDIAPFDENVDPVAEAKAIVNELKKYDETLYDKPRWLVLNKLDVVPEEERAARVKDFVKRYKWKGPVFHISALTGEGCRELVYAIKDHLAALKAEEAAALAEPDIRLDDRLHNVDRDDSKA.

The Obg domain maps to 1–159; it reads MKFIDEARIE…RMLKLELKVL (159 aa). Residues 160-334 form the OBG-type G domain; that stretch reads ADVGLLGMPN…LVYAIKDHLA (175 aa). Residues 166–173, 191–195, 213–216, 284–287, and 315–317 each bind GTP; these read GMPNAGKS, FTTLH, DIPG, NKLD, and SAL. Residues Ser-173 and Thr-193 each contribute to the Mg(2+) site.

It belongs to the TRAFAC class OBG-HflX-like GTPase superfamily. OBG GTPase family. In terms of assembly, monomer. The cofactor is Mg(2+).

It localises to the cytoplasm. Functionally, an essential GTPase which binds GTP, GDP and possibly (p)ppGpp with moderate affinity, with high nucleotide exchange rates and a fairly low GTP hydrolysis rate. Plays a role in control of the cell cycle, stress response, ribosome biogenesis and in those bacteria that undergo differentiation, in morphogenesis control. The polypeptide is GTPase Obg (Cupriavidus metallidurans (strain ATCC 43123 / DSM 2839 / NBRC 102507 / CH34) (Ralstonia metallidurans)).